A 298-amino-acid polypeptide reads, in one-letter code: S-adenosylmethionine-dependent nucleotide dehydratase (298 aa).

The Radical SAM core domain maps to 8–235 (ANKELVVNWH…QRFGEIIYAE (228 aa)). 3 residues coordinate [4Fe-4S] cluster: cysteine 22, cysteine 26, and cysteine 29.

This sequence belongs to the radical SAM superfamily. Viperin family. [4Fe-4S] cluster is required as a cofactor.

It carries out the reaction CTP + AH2 + S-adenosyl-L-methionine = 3'-deoxy-3',4'-didehydro-CTP + 5'-deoxyadenosine + L-methionine + A + H2O + H(+). It catalyses the reaction UTP + AH2 + S-adenosyl-L-methionine = 3'-deoxy-3',4'-didehydro-UTP + 5'-deoxyadenosine + L-methionine + A + H2O + H(+). Functionally, expression of pVip8 in E.coli (strain MG1655) confers resistance to phages lambda, P1, SECphi8 and T7. Prevents culture collapse upon infection with T7. Catalyzes the conversion of cytidine triphosphate (CTP) to 3'-deoxy-3',4'-didehydro-CTP (ddhCTP) and uridine triphosphate (UTP) to 3'-deoxy-3',4'-didehydro-UTP (ddhUTP), probably via a SAM-dependent radical mechanism. The modified nucleotides repress transcription from T7 RNA polymerase-directed genes (possibly by acting as chain terminators), strongly suggesting these nucleotides block viral polymerase transcription. This is S-adenosylmethionine-dependent nucleotide dehydratase from Psychrobacter lutiphocae (strain DSM 21542 / CCUG 56590 / IMMIB L-1110).